A 104-amino-acid chain; its full sequence is SOSS complex subunit C (104 aa).

Ala-2 is modified (N-acetylalanine).

The protein belongs to the SOSS-C family. In terms of assembly, component of the SOSS complex, composed of SOSS-B (SOSS-B1/NABP2 or SOSS-B2/NABP1), SOSS-A/INTS3 and SOSS-C/INIP. SOSS complexes containing SOSS-B1/NABP2 are more abundant than complexes containing SOSS-B2/NABP1. Interacts with INTS3; the interaction is direct.

It localises to the nucleus. Its function is as follows. Component of the SOSS complex, a multiprotein complex that functions downstream of the MRN complex to promote DNA repair and G2/M checkpoint. The SOSS complex associates with single-stranded DNA at DNA lesions and influences diverse endpoints in the cellular DNA damage response including cell-cycle checkpoint activation, recombinational repair and maintenance of genomic stability. Required for efficient homologous recombination-dependent repair of double-strand breaks (DSBs) and ATM-dependent signaling pathways. The chain is SOSS complex subunit C (INIP) from Bos taurus (Bovine).